The sequence spans 1340 residues: Protein SHORT ROOT IN SALT MEDIUM 1 (1340 aa).

Disordered stretches follow at residues 1–73 (MHRD…RSHL), 161–185 (YGEQ…ADPS), 357–473 (EEER…IRRS), 723–750 (TVEV…KKTV), 784–990 (PETT…PPRA), and 1063–1269 (RNQR…KREE). Low complexity predominate over residues 7–39 (SSRGTGYGQQQYGSQSGYSQNLGSGYPGSSVSG). Residues 46 to 60 (QISLSSRHPSITGAP) show a composition bias toward polar residues. Basic and acidic residues-rich tracts occupy residues 173–182 (LQNEPTRRYA), 357–470 (EEER…EASI), and 723–735 (TVEV…KKSP). Residues 355–426 (LREEERRRED…RERKRALEIK (72 aa)) are a coiled coil. Polar residues predominate over residues 810 to 824 (GDTSDPSAKANEQTP). Basic residues predominate over residues 828-840 (IVKKKIIKRVAKR). Composition is skewed to basic and acidic residues over residues 841-872 (KVAE…KKSS), 887-988 (EDVK…EEPP), 1069-1097 (HQEE…DKEA), and 1105-1138 (PGKD…ETLG). A coiled-coil region spans residues 1052–1086 (LKKLRVKIVRQRNQRKRHQEELSVKQNEAKSQDKR). A compositionally biased stretch (acidic residues) spans 1153–1204 (ENQDEEDDDGDDDPEEDPEEDPEEDPEEDPEEDPEECEEMDVANTEQEEPAE). Basic and acidic residues-rich tracts occupy residues 1205 to 1214 (EPQKKEENLE) and 1229 to 1257 (TDNR…HGKQ). Positions 1270–1305 (TVDKELLQAFRFFDRNQAGYVRVEDMRVTIHSLGKF) constitute an EF-hand domain.

As to quaternary structure, interacts with BHLH148/RITF1. In terms of tissue distribution, expressed ubiquitously at high levels, including in guard cells.

The protein localises to the nucleus. Required for salt tolerance and sodium (Na) homeostasis after salt stress. Together with BHLH148/RITF1, regulates the transcription of several genes involved in the detoxification of reactive oxygen species (ROS) generated by salt (NaCl) stress. Binds calcium. The sequence is that of Protein SHORT ROOT IN SALT MEDIUM 1 from Arabidopsis thaliana (Mouse-ear cress).